Consider the following 341-residue polypeptide: Eukaryotic translation initiation factor 3 subunit I (341 aa).

WD repeat units follow at residues 8 to 49 (GHER…GTYR), 50 to 91 (GHQG…KTWD), 135 to 184 (QSDE…LLYN), 189 to 228 (ELNQ…VLKS), and 286 to 325 (GHFG…YDFL).

The protein belongs to the eIF-3 subunit I family. As to quaternary structure, component of the eukaryotic translation initiation factor 3 (eIF-3) complex.

The protein resides in the cytoplasm. Functionally, component of the eukaryotic translation initiation factor 3 (eIF-3) complex, which is involved in protein synthesis of a specialized repertoire of mRNAs and, together with other initiation factors, stimulates binding of mRNA and methionyl-tRNAi to the 40S ribosome. The eIF-3 complex specifically targets and initiates translation of a subset of mRNAs involved in cell proliferation. The chain is Eukaryotic translation initiation factor 3 subunit I from Chaetomium globosum (strain ATCC 6205 / CBS 148.51 / DSM 1962 / NBRC 6347 / NRRL 1970) (Soil fungus).